Reading from the N-terminus, the 211-residue chain is Probable nicotinate-nucleotide adenylyltransferase (211 aa).

Belongs to the NadD family.

It catalyses the reaction nicotinate beta-D-ribonucleotide + ATP + H(+) = deamido-NAD(+) + diphosphate. Its pathway is cofactor biosynthesis; NAD(+) biosynthesis; deamido-NAD(+) from nicotinate D-ribonucleotide: step 1/1. Functionally, catalyzes the reversible adenylation of nicotinate mononucleotide (NaMN) to nicotinic acid adenine dinucleotide (NaAD). This is Probable nicotinate-nucleotide adenylyltransferase from Legionella pneumophila (strain Corby).